We begin with the raw amino-acid sequence, 325 residues long: Aldo-keto reductase family 1 member A1 (325 aa).

Thr-2 is modified (N-acetylthreonine). Phosphoserine is present on Ser-4. Residues 11 to 20 (GQKMPLIGLG), Thr-21, and Trp-22 contribute to the NADP(+) site. At Ser-38 the chain carries Phosphoserine. Residue Asp-45 coordinates NADP(+). Residue Tyr-50 is the Proton donor of the active site. Residue Lys-127 is modified to N6-acetyllysine; alternate. An N6-succinyllysine; alternate modification is found at Lys-127. Residue Lys-145 is modified to N6-succinyllysine. Positions 162, 163, 211, 213, 215, 216, 263, 264, 265, 269, 272, and 273 each coordinate NADP(+). Residue Ser-211 is modified to Phosphoserine.

Belongs to the aldo/keto reductase family. Monomer. In terms of tissue distribution, widely expressed.

Its subcellular location is the cytoplasm. It is found in the cytosol. It localises to the apical cell membrane. The catalysed reaction is a primary alcohol + NADP(+) = an aldehyde + NADPH + H(+). The enzyme catalyses L-gulonate + NADP(+) = aldehydo-D-glucuronate + NADPH + H(+). It catalyses the reaction L-gulono-1,4-lactone + NADP(+) = D-glucurono-3,6-lactone + NADPH + H(+). It carries out the reaction allyl alcohol + NADP(+) = acrolein + NADPH + H(+). The catalysed reaction is glycerol + NADP(+) = D-glyceraldehyde + NADPH + H(+). The enzyme catalyses glycerol + NADP(+) = L-glyceraldehyde + NADPH + H(+). It catalyses the reaction hydroxyacetone + NADP(+) = methylglyoxal + NADPH + H(+). It carries out the reaction 3-deoxyfructose + NADP(+) = 3-deoxyglucosone + NADPH + H(+). The catalysed reaction is (R)-mevalonate + NADP(+) = (R)-mevaldate + NADPH + H(+). The enzyme catalyses pyridine 3-methanol + NADP(+) = pyridine-3-carbaldehyde + NADPH + H(+). It catalyses the reaction S-nitroso-CoA + NADPH + H(+) = sulfinamide-CoA + NADP(+). It carries out the reaction S-nitrosoglutathione + NADPH + H(+) = S-(hydroxysulfenamide)glutathione + NADP(+). In terms of biological role, catalyzes the NADPH-dependent reduction of a wide variety of carbonyl-containing compounds to their corresponding alcohols. Displays enzymatic activity towards endogenous metabolites such as aromatic and aliphatic aldehydes, ketones, monosaccharides and bile acids, with a preference for negatively charged substrates, such as glucuronate and succinic semialdehyde. Plays an important role in ascorbic acid biosynthesis by catalyzing the reduction of D-glucuronic acid and D-glucurono-gamma-lactone. Functions as a detoxifiying enzyme by reducing a range of toxic aldehydes. Reduces methylglyoxal and 3-deoxyglucosone, which are present at elevated levels under hyperglycemic conditions and are cytotoxic. Involved in the detoxification of lipid-derived aldehydes like acrolein. Plays a role in the activation of procarcinogens, such as polycyclic aromatic hydrocarbon trans-dihydrodiols, and in the metabolism of various xenobiotics and drugs. Also acts as an inhibitor of protein S-nitrosylation by mediating degradation of S-nitroso-coenzyme A (S-nitroso-CoA), a cofactor required to S-nitrosylate proteins. S-nitroso-CoA reductase activity is involved in reprogramming intermediary metabolism in renal proximal tubules, notably by inhibiting protein S-nitrosylation of isoform 2 of PKM (PKM2). Also acts as a S-nitroso-glutathione reductase by catalyzing the NADPH-dependent reduction of S-nitrosoglutathione. Displays no reductase activity towards retinoids. This chain is Aldo-keto reductase family 1 member A1, found in Mus musculus (Mouse).